Here is a 391-residue protein sequence, read N- to C-terminus: Curcumin synthase 2 (391 aa).

Cysteine 166 is a catalytic residue.

Belongs to the thiolase-like superfamily. Chalcone/stilbene synthases family. Homodimer.

The catalysed reaction is (E)-feruloylacetyl-CoA + (E)-feruloyl-CoA + H2O = curcumin + CO2 + 2 CoA. It functions in the pathway secondary metabolite biosynthesis; flavonoid biosynthesis. Catalyzes the synthesis of curcumin by condensing feruloyl-CoA with a diketide-CoA in the curcuminoid biosynthesis. This Curcuma longa (Turmeric) protein is Curcumin synthase 2 (CURS2).